Consider the following 430-residue polypeptide: Adenylosuccinate synthetase (430 aa).

Residues 12–18 (GDEGKGK) and 40–42 (GHT) each bind GTP. The Proton acceptor role is filled by aspartate 13. Residues aspartate 13 and glycine 40 each coordinate Mg(2+). IMP is bound by residues 13–16 (DEGK), 38–41 (NAGH), threonine 128, arginine 142, glutamine 223, threonine 238, and arginine 302. Catalysis depends on histidine 41, which acts as the Proton donor. 298-304 (TTTGRPR) is a substrate binding site. Residues arginine 304, 330-332 (SID), and 412-414 (SVG) each bind GTP.

The protein belongs to the adenylosuccinate synthetase family. As to quaternary structure, homodimer. Mg(2+) is required as a cofactor.

It localises to the cytoplasm. The catalysed reaction is IMP + L-aspartate + GTP = N(6)-(1,2-dicarboxyethyl)-AMP + GDP + phosphate + 2 H(+). It functions in the pathway purine metabolism; AMP biosynthesis via de novo pathway; AMP from IMP: step 1/2. Functionally, plays an important role in the de novo pathway of purine nucleotide biosynthesis. Catalyzes the first committed step in the biosynthesis of AMP from IMP. This Streptococcus pyogenes serotype M49 (strain NZ131) protein is Adenylosuccinate synthetase.